A 416-amino-acid polypeptide reads, in one-letter code: CinA-like protein (416 aa).

This sequence belongs to the CinA family.

The polypeptide is CinA-like protein (Syntrophomonas wolfei subsp. wolfei (strain DSM 2245B / Goettingen)).